Reading from the N-terminus, the 274-residue chain is Nickel/cobalt efflux system RcnA (274 aa).

Residues 1-12 (MTEFTTLLQQGN) are Periplasmic-facing. A helical transmembrane segment spans residues 13–33 (AWFFIPSAILLGALHGLEPGH). Topologically, residues 34-56 (SKTMMAAFIIAIKGTIKQAVMLG) are cytoplasmic. A helical membrane pass occupies residues 57 to 77 (LAATISHTAVVWLIAFGGMVI). The Periplasmic portion of the chain corresponds to 78 to 86 (SKRFTAQSA). The helical transmembrane segment at 87 to 107 (EPWLQLISAVIIISTAFWMFW) threads the bilayer. The Cytoplasmic portion of the chain corresponds to 108-174 (RTWRGERNWL…FDGREVTNWQ (67 aa)). The segment covering 127–137 (HHHHDHEDHHD) has biased composition (basic and acidic residues). Residues 127–153 (HHHHDHEDHHDHGHHHHHEHGEYQDAH) form a disordered region. A helical transmembrane segment spans residues 175–195 (ILLFGLTGGLIPCPAAITVLL). Topologically, residues 196-209 (ICIQLKALTLGATL) are periplasmic. A helical membrane pass occupies residues 210–230 (VVSFSLGLALTLVTVGVGAAI). Over 231–251 (SVQQVAKRWSGFNTLAKRAPY) the chain is Cytoplasmic. A helical transmembrane segment spans residues 252-272 (FSSLLIGLVGVYMGVHGFMGI). The Periplasmic portion of the chain corresponds to 273–274 (MR).

This sequence belongs to the NiCoT transporter (TC 2.A.52) family. RcnA subfamily.

Its subcellular location is the cell inner membrane. In terms of biological role, efflux system for nickel and cobalt. In Escherichia coli O1:K1 / APEC, this protein is Nickel/cobalt efflux system RcnA (rcnA).